The sequence spans 142 residues: Nucleoside diphosphate kinase (142 aa).

Lys-11, Phe-59, Arg-87, Thr-93, Arg-104, and Asn-114 together coordinate ATP. His-117 acts as the Pros-phosphohistidine intermediate in catalysis.

It belongs to the NDK family. In terms of assembly, homotetramer. Mg(2+) serves as cofactor.

The protein localises to the cytoplasm. The enzyme catalyses a 2'-deoxyribonucleoside 5'-diphosphate + ATP = a 2'-deoxyribonucleoside 5'-triphosphate + ADP. It catalyses the reaction a ribonucleoside 5'-diphosphate + ATP = a ribonucleoside 5'-triphosphate + ADP. In terms of biological role, major role in the synthesis of nucleoside triphosphates other than ATP. The ATP gamma phosphate is transferred to the NDP beta phosphate via a ping-pong mechanism, using a phosphorylated active-site intermediate. This is Nucleoside diphosphate kinase from Wigglesworthia glossinidia brevipalpis.